The sequence spans 176 residues: Ribosome maturation factor RimM (176 aa).

The PRC barrel domain occupies 97-176; the sequence is EDEFYWRDLI…QILVDWDPDF (80 aa).

This sequence belongs to the RimM family. Binds ribosomal protein uS19.

It localises to the cytoplasm. In terms of biological role, an accessory protein needed during the final step in the assembly of 30S ribosomal subunit, possibly for assembly of the head region. Essential for efficient processing of 16S rRNA. May be needed both before and after RbfA during the maturation of 16S rRNA. It has affinity for free ribosomal 30S subunits but not for 70S ribosomes. This Shewanella oneidensis (strain ATCC 700550 / JCM 31522 / CIP 106686 / LMG 19005 / NCIMB 14063 / MR-1) protein is Ribosome maturation factor RimM.